A 912-amino-acid polypeptide reads, in one-letter code: Serine/threonine-protein kinase D1 (912 aa).

Tyr95 carries the post-translational modification Phosphotyrosine. A Phorbol-ester/DAG-type 1 zinc finger spans residues 146 to 196 (PHALFVHSYRAPAFCDHCGEMLWGLVRQGLKCEGCGLNYHKRCAFKIPNNC). Phosphoserine occurs at positions 205, 208, 219, and 223. The segment at 270–320 (PHTFVIHSYTRPTVCQYCKKLLKGLFRQGLQCKDCRFNCHKRCAPKVPNNC) adopts a Phorbol-ester/DAG-type 2 zinc-finger fold. Ser345 is modified (phosphoserine). A disordered region spans residues 377-402 (NDSGEMQDPDPDHEDANRTISPSTSN). 2 positions are modified to phosphoserine; by MAPK13: Ser397 and Ser401. Residues 422 to 541 (TVMKEGWMVH…WEIAIQHALM (120 aa)) enclose the PH domain. A Phosphotyrosine modification is found at Tyr432. The residue at position 448 (Ser448) is a Phosphoserine. Position 463 is a phosphotyrosine; by ABL (Tyr463). Residue Ser473 is modified to Phosphoserine. Tyr502 carries the phosphotyrosine modification. Ser548 carries the phosphoserine modification. Residues 583–839 (IFPDEVLGSG…VDKTLSHPWL (257 aa)) form the Protein kinase domain. Residues 589–597 (LGSGQFGIV) and Lys612 contribute to the ATP site. Asp706 functions as the Proton acceptor in the catalytic mechanism. Ser738 carries the phosphoserine; by PKC/PRKCD modification. Phosphoserine; by autocatalysis and PKC/PRKCD is present on Ser742. Tyr749 is subject to Phosphotyrosine. Ser910 is modified (phosphoserine; by autocatalysis).

The protein belongs to the protein kinase superfamily. CAMK Ser/Thr protein kinase family. PKD subfamily. Interacts (via N-terminus) with ADAP1/CENTA1. Interacts with MAPK13. Interacts with DAPK1 in an oxidative stress-regulated manner. Interacts with USP28; the interaction induces phosphorylation of USP28 and activated KRAS-mediated stabilization of ZNF304. Interacts with AKAP13 (via C-terminal domain). Requires Mg(2+) as cofactor. Post-translationally, phosphorylated at Ser-397 and Ser-401 by MAPK13 during regulation of insulin secretion in pancreatic beta cells. Phosphorylated by DAPK1. Phosphorylated at Tyr-95 and by ABL at Tyr-463, which primes the kinase in response to oxidative stress, and promotes a second step activating phosphorylation at Ser-738/Ser-742 by PKRD. Phosphorylated on Ser-910 upon S.enterica infection in macrophages.

The protein localises to the cytoplasm. It is found in the cell membrane. The protein resides in the golgi apparatus. Its subcellular location is the trans-Golgi network. It carries out the reaction L-seryl-[protein] + ATP = O-phospho-L-seryl-[protein] + ADP + H(+). The catalysed reaction is L-threonyl-[protein] + ATP = O-phospho-L-threonyl-[protein] + ADP + H(+). Its activity is regulated as follows. Activated by DAG and phorbol esters. Phorbol-ester/DAG-type domain 1 binds DAG with high affinity and appears to play the dominant role in mediating translocation to the cell membrane and trans-Golgi network. Phorbol-ester/DAG-type domain 2 binds phorbol ester with higher affinity. Autophosphorylation of Ser-742 and phosphorylation of Ser-738 by PKC relieves auto-inhibition by the PH domain. Phosphorylation on Tyr-463 by the SRC-ABL1 pathway in response to oxidative stress, is also required for activation. Activated by DAPK1 under oxidative stress. In terms of biological role, serine/threonine-protein kinase that converts transient diacylglycerol (DAG) signals into prolonged physiological effects downstream of PKC, and is involved in the regulation of MAPK8/JNK1 and Ras signaling, Golgi membrane integrity and trafficking, cell survival through NF-kappa-B activation, cell migration, cell differentiation by mediating HDAC7 nuclear export, cell proliferation via MAPK1/3 (ERK1/2) signaling, and plays a role in cardiac hypertrophy, VEGFA-induced angiogenesis, genotoxic-induced apoptosis and flagellin-stimulated inflammatory response. Phosphorylates the epidermal growth factor receptor (EGFR) on dual threonine residues, which leads to the suppression of epidermal growth factor (EGF)-induced MAPK8/JNK1 activation and subsequent JUN phosphorylation. Phosphorylates RIN1, inducing RIN1 binding to 14-3-3 proteins YWHAB, YWHAE and YWHAZ and increased competition with RAF1 for binding to GTP-bound form of Ras proteins (NRAS, HRAS and KRAS). Acts downstream of the heterotrimeric G-protein beta/gamma-subunit complex to maintain the structural integrity of the Golgi membranes, and is required for protein transport along the secretory pathway. In the trans-Golgi network (TGN), regulates the fission of transport vesicles that are on their way to the plasma membrane. May act by activating the lipid kinase phosphatidylinositol 4-kinase beta (PI4KB) at the TGN for the local synthesis of phosphorylated inositol lipids, which induces a sequential production of DAG, phosphatidic acid (PA) and lyso-PA (LPA) that are necessary for membrane fission and generation of specific transport carriers to the cell surface. Under oxidative stress, is phosphorylated at Tyr-463 via SRC-ABL1 and contributes to cell survival by activating IKK complex and subsequent nuclear translocation and activation of NFKB1. Involved in cell migration by regulating integrin alpha-5/beta-3 recycling and promoting its recruitment in newly forming focal adhesion. In osteoblast differentiation, mediates the bone morphogenetic protein 2 (BMP2)-induced nuclear export of HDAC7, which results in the inhibition of HDAC7 transcriptional repression of RUNX2. In neurons, plays an important role in neuronal polarity by regulating the biogenesis of TGN-derived dendritic vesicles, and is involved in the maintenance of dendritic arborization and Golgi structure in hippocampal cells. May potentiate mitogenesis induced by the neuropeptide bombesin or vasopressin by mediating an increase in the duration of MAPK1/3 (ERK1/2) signaling, which leads to accumulation of immediate-early gene products including FOS that stimulate cell cycle progression. Plays an important role in the proliferative response induced by low calcium in keratinocytes, through sustained activation of MAPK1/3 (ERK1/2) pathway. Downstream of novel PKC signaling, plays a role in cardiac hypertrophy by phosphorylating HDAC5, which in turn triggers XPO1/CRM1-dependent nuclear export of HDAC5, MEF2A transcriptional activation and induction of downstream target genes that promote myocyte hypertrophy and pathological cardiac remodeling. Mediates cardiac troponin I (TNNI3) phosphorylation at the PKA sites, which results in reduced myofilament calcium sensitivity, and accelerated crossbridge cycling kinetics. The PRKD1-HDAC5 pathway is also involved in angiogenesis by mediating VEGFA-induced specific subset of gene expression, cell migration, and tube formation. In response to VEGFA, is necessary and required for HDAC7 phosphorylation which induces HDAC7 nuclear export and endothelial cell proliferation and migration. During apoptosis induced by cytarabine and other genotoxic agents, PRKD1 is cleaved by caspase-3 at Asp-378, resulting in activation of its kinase function and increased sensitivity of cells to the cytotoxic effects of genotoxic agents. In epithelial cells, is required for transducing flagellin-stimulated inflammatory responses by binding and phosphorylating TLR5, which contributes to MAPK14/p38 activation and production of inflammatory cytokines. Acts as an activator of NLRP3 inflammasome assembly by mediating phosphorylation of NLRP3. May play a role in inflammatory response by mediating activation of NF-kappa-B. May be involved in pain transmission by directly modulating TRPV1 receptor. Plays a role in activated KRAS-mediated stabilization of ZNF304 in colorectal cancer (CRC) cells. Regulates nuclear translocation of transcription factor TFEB in macrophages upon live S.enterica infection. This chain is Serine/threonine-protein kinase D1 (PRKD1), found in Homo sapiens (Human).